A 622-amino-acid chain; its full sequence is Chaperone protein HtpG (622 aa).

Positions 1–322 are a; substrate-binding; sequence MTEAKNYEFQ…SEDLPLNISR (322 aa). The segment at 323–539 is b; that stretch reads QSLQDNALVS…DGFMSASMER (217 aa). The tract at residues 540–622 is c; the sequence is VLAASRKEQG…KILDRAVSRA (83 aa).

This sequence belongs to the heat shock protein 90 family. In terms of assembly, homodimer.

It localises to the cytoplasm. Its function is as follows. Molecular chaperone. Has ATPase activity. This Desulfotalea psychrophila (strain LSv54 / DSM 12343) protein is Chaperone protein HtpG.